The sequence spans 97 residues: uncharacterized protein (97 aa).

The tract at residues 72-97 (TVERKRSEHTNSRKKDPSAYTWSDVK) is disordered. Positions 73–88 (VERKRSEHTNSRKKDP) are enriched in basic and acidic residues.

This sequence belongs to the chlamydial CPn_0121/CT_031/TC_0300 family.

This is an uncharacterized protein from Chlamydia pneumoniae (Chlamydophila pneumoniae).